The following is a 268-amino-acid chain: Undecaprenyl-diphosphatase (268 aa).

A run of 7 helical transmembrane segments spans residues 5–25 (SIIS…IPVS), 43–63 (GNTF…LVYF), 84–104 (LSVL…HGFI), 109–129 (FETP…LYVI), 184–204 (AAEF…ALDL), 213–233 (IDDI…GIFV), and 248–268 (PFAI…WLLG).

This sequence belongs to the UppP family.

Its subcellular location is the cell inner membrane. The catalysed reaction is di-trans,octa-cis-undecaprenyl diphosphate + H2O = di-trans,octa-cis-undecaprenyl phosphate + phosphate + H(+). In terms of biological role, catalyzes the dephosphorylation of undecaprenyl diphosphate (UPP). Confers resistance to bacitracin. This chain is Undecaprenyl-diphosphatase, found in Sinorhizobium medicae (strain WSM419) (Ensifer medicae).